A 623-amino-acid polypeptide reads, in one-letter code: Chaperone protein HtpG (623 aa).

The interval 1–341 (MEKREFKAES…SQDLSLNISR (341 aa)) is a; substrate-binding. The segment at 342-549 (EMLQHDRQLS…EGEVSIEMEK (208 aa)) is b. Residues 550 to 623 (ILSAMPNNQG…FTNDICKLMK (74 aa)) form a c region.

The protein belongs to the heat shock protein 90 family. Homodimer.

It is found in the cytoplasm. Functionally, molecular chaperone. Has ATPase activity. This Clostridium perfringens (strain 13 / Type A) protein is Chaperone protein HtpG.